The sequence spans 287 residues: 4-hydroxybenzoate octaprenyltransferase (287 aa).

9 consecutive transmembrane segments (helical) span residues 7-27 (FISYGYLIRLDKPIGTLLLLW), 30-50 (LWALWLASSGVLDLSILLIFV), 94-114 (VAVASFLALCAFLLIQPLNAF), 118-138 (LSVLALLVAFIYPFTKRFFAM), 142-162 (VLGIAFGFGIPMAYAAILDFI), 167-187 (WFLFTGNIFWAIAYDTAYAMV), 209-229 (VVVIAISYGMLFLSHLWVAQL), 235-255 (YFLVGWFAALACAIYHLKLVS), and 266-286 (FRHNNWLGGFLFLGIVLGLGV).

The protein belongs to the UbiA prenyltransferase family. Requires Mg(2+) as cofactor.

It localises to the cell inner membrane. It carries out the reaction all-trans-octaprenyl diphosphate + 4-hydroxybenzoate = 4-hydroxy-3-(all-trans-octaprenyl)benzoate + diphosphate. It functions in the pathway cofactor biosynthesis; ubiquinone biosynthesis. In terms of biological role, catalyzes the prenylation of para-hydroxybenzoate (PHB) with an all-trans polyprenyl group. Mediates the second step in the final reaction sequence of ubiquinone-8 (UQ-8) biosynthesis, which is the condensation of the polyisoprenoid side chain with PHB, generating the first membrane-bound Q intermediate 3-octaprenyl-4-hydroxybenzoate. In Polynucleobacter necessarius subsp. necessarius (strain STIR1), this protein is 4-hydroxybenzoate octaprenyltransferase.